A 342-amino-acid polypeptide reads, in one-letter code: Nucleoid-associated protein Sputcn32_2288 (342 aa).

The protein belongs to the YejK family.

The protein resides in the cytoplasm. Its subcellular location is the nucleoid. This Shewanella putrefaciens (strain CN-32 / ATCC BAA-453) protein is Nucleoid-associated protein Sputcn32_2288.